A 239-amino-acid polypeptide reads, in one-letter code: 1-(5-phosphoribosyl)-5-[(5-phosphoribosylamino)methylideneamino] imidazole-4-carboxamide isomerase (239 aa).

Residue Asp-8 is the Proton acceptor of the active site. The active-site Proton donor is the Asp-129.

This sequence belongs to the HisA/HisF family.

It localises to the cytoplasm. The catalysed reaction is 1-(5-phospho-beta-D-ribosyl)-5-[(5-phospho-beta-D-ribosylamino)methylideneamino]imidazole-4-carboxamide = 5-[(5-phospho-1-deoxy-D-ribulos-1-ylimino)methylamino]-1-(5-phospho-beta-D-ribosyl)imidazole-4-carboxamide. The protein operates within amino-acid biosynthesis; L-histidine biosynthesis; L-histidine from 5-phospho-alpha-D-ribose 1-diphosphate: step 4/9. This Legionella pneumophila subsp. pneumophila (strain Philadelphia 1 / ATCC 33152 / DSM 7513) protein is 1-(5-phosphoribosyl)-5-[(5-phosphoribosylamino)methylideneamino] imidazole-4-carboxamide isomerase.